Consider the following 290-residue polypeptide: Arylamine N-acetyltransferase 1 (290 aa).

N-acetylmethionine is present on M1. The active-site Acyl-thioester intermediate is C68. Positions 103 and 104 each coordinate CoA. A substrate-binding site is contributed by 106 to 107; it reads IH. Residues H107 and D122 contribute to the active site. CoA contacts are provided by Y208 and S214.

The protein belongs to the arylamine N-acetyltransferase family.

The protein resides in the cytoplasm. It carries out the reaction an arylamine + acetyl-CoA = an N-acetylarylamine + CoA. This Oryctolagus cuniculus (Rabbit) protein is Arylamine N-acetyltransferase 1 (NAT1).